The primary structure comprises 1404 residues: MRSHNDFESITIRLASPERIKEWSYGEVKKPETINYRTLKPEKDGLFCEKIFGTTKDWECYCGKFKSIRYKGVICDKCGVEVTHSKVRRERMGHIELAAPVSHIWYYRSVPSRMGLLLDMTVNQLKSVLYFEKYVIIDPADSGRSRGELIDEEEYHGYLDEYGDKFVAGIGADAIKELLARIDVDAEARMIRQKIQDKDKISDKRILKRLEVLEAFRDSGNRPEWMVLDIVPVIPPELRPMVQLEGGRFATSDLNDLYRRVINRNNRLKRLLALKAPEIIVRNEKRMLQEAVDALFDNSRRKRAVKGKGNRPLKSISDMLKGKQGRFRQNLLGKRVDYSGRSVIVVGPELKYHEMGLPKKMALELFKPFIMKRLVDLDLAPNIKSAKKKVEAEDKEVFDVLEYVVKEHPVMLNRAPTLHRLGIQAFLPVLVEGKAIKLHPLVCHAFNADFDGDQMAIHVPLTPKAQLETWMLMLSPHNILNPANGHPICGPTQDIVLGIYYLTSELPSEPGAPLKSFSNLDEVHYAIDRGVVEFRTKISVYHQGKILETTPGRLIFNTILPEGYAYVNRPLSDKETNRIIADVYDKYGPAKTVLMLDDIKKLGYRYATLFVPTISIEDIRVSPGKVGLVGDANKEVEKADSEYRKGIITNEERRKKVIEIWTKTNDLITESMFKELEKDKGGFNPVFIMAASGARGSKQQIRQLAGMRGLMAKPSGEIIELAIRSNFREGLSVLEFFISTHGARKGLADTALKTADAGYLTRRLVDISQDVIISEDDCGTEESISLGIVKEGENVIVSLNDRVFGRYTAEDVIDPVTDKVVYPRNTLITREVGQKVENLGYDKIRVRSPLTCESKQGVCIRCYGMDMARLIPAEIGEAVGTIAAQSIGQPGTQLTMRTFHIGGAASAKVQEKEHKVSYTGIVNNINGRLITNEKSQSVFSRRGSIVIQRLIQQYKTEELSNLRVENGQKVDKGELVATSPSGENITSAMPGAVHIENGIFRILGEEAVIPVKTGTVVNVKVNDITQPNQPLAEFDPYNEVGISEIDGTVQWMDLEIGKNVRRDEDLRTSNILLKVIEQRREKLNPRIAVISGGSREEYSVPVDAIISVQDGDKVKAGDILFKIPTVAEKTRDITGGLPRVDELFEARRPKDATTLAETDGKIEISGEIVKEKRVLYIHPDNPDQEKVKVTIPIGKQIRVRNGDFVKRGDQIDDGNLDPHDILRVKGVTALQVYLVQEVQEVYRLQGVHINDKHIEVVVRQMLRKVLITDSGDTSFVNQQQIDRLMFNEENKRVIAEGGSPAESVPILLGLTKASLNTESFFSAASFQETTKVLTDAAIKGKTDNLMGLKENVIIGHMIPAGTGTKKYKDISVFKSAYGDLDRPLEEEEEEEIPQSIADDSDGDE.

Zn(2+) contacts are provided by cysteine 60, cysteine 62, cysteine 75, and cysteine 78. Residues aspartate 449, aspartate 451, and aspartate 453 each coordinate Mg(2+). Zn(2+)-binding residues include cysteine 778, cysteine 852, cysteine 859, and cysteine 862. Residues 1381–1404 form a disordered region; that stretch reads DRPLEEEEEEEIPQSIADDSDGDE. The span at 1384 to 1404 shows a compositional bias: acidic residues; that stretch reads LEEEEEEEIPQSIADDSDGDE.

This sequence belongs to the RNA polymerase beta' chain family. The RNAP catalytic core consists of 2 alpha, 1 beta, 1 beta' and 1 omega subunit. When a sigma factor is associated with the core the holoenzyme is formed, which can initiate transcription. Requires Mg(2+) as cofactor. It depends on Zn(2+) as a cofactor.

It carries out the reaction RNA(n) + a ribonucleoside 5'-triphosphate = RNA(n+1) + diphosphate. In terms of biological role, DNA-dependent RNA polymerase catalyzes the transcription of DNA into RNA using the four ribonucleoside triphosphates as substrates. This chain is DNA-directed RNA polymerase subunit beta', found in Leptospira borgpetersenii serovar Hardjo-bovis (strain L550).